The chain runs to 157 residues: Protein E6 (157 aa).

Zinc fingers lie at residues 41 to 77 and 114 to 150; these read CNFC…CRVC and CQTC…CRQC.

It belongs to the papillomaviridae E6 protein family. As to quaternary structure, forms homodimers. Interacts with ubiquitin-protein ligase UBE3A/E6-AP; this interaction stimulates UBE3A ubiquitin activity. Interacts with host BAK1.

It localises to the host cytoplasm. The protein resides in the host nucleus. In terms of biological role, plays a major role in the induction and maintenance of cellular transformation. E6 associates with host UBE3A/E6-AP ubiquitin-protein ligase and modulates its activity. Protects host keratinocytes from apoptosis by mediating the degradation of host BAK1. May also inhibit host immune response. The sequence is that of Protein E6 from Human papillomavirus type 5b.